We begin with the raw amino-acid sequence, 442 residues long: PTS system oligo-beta-mannoside-specific EIIC component (442 aa).

The region spanning 5 to 411 is the PTS EIIC type-3 domain; sequence ISQFLVPIAG…LIVFVIWFPF (407 aa). 11 helical membrane passes run 28–48, 67–87, 97–117, 138–157, 177–197, 205–225, 228–248, 286–306, 329–349, 365–385, and 391–411; these read AFML…LTNL, FGIA…FGIG, EAVF…PFII, GMFL…RRIV, FAAL…NVMV, MHDV…SGII, LIAV…QIII, TVGM…LIFM, PIIF…WVLA, LVPP…INGI, and IMGG…WFPF.

The protein localises to the cell membrane. Its function is as follows. The phosphoenolpyruvate-dependent sugar phosphotransferase system (sugar PTS), a major carbohydrate active transport system, catalyzes the phosphorylation of incoming sugar substrates concomitantly with their translocation across the cell membrane. The enzyme II GmuABC PTS system is involved in the transport of oligo-glucomannans such as cellobiose or mannobiose. This is PTS system oligo-beta-mannoside-specific EIIC component from Bacillus subtilis (strain 168).